A 495-amino-acid polypeptide reads, in one-letter code: Cardiolipin synthase A (495 aa).

2 consecutive transmembrane segments (helical) span residues 9–29 and 46–66; these read IEVLFVIIKWILLLGYWWLIT and MAWLLIIYVVPFIGAIIYLLL. PLD phosphodiesterase domains follow at residues 227–254 and 408–435; these read MDLRQHRKMILIDNYIGYTGSMNMIDPK and EGGLLHTKSILVDDQLSLVGTVNLDMRS. Catalysis depends on residues His232, Lys234, Asp239, His413, Lys415, and Asp420.

It belongs to the phospholipase D family. Cardiolipin synthase subfamily. ClsA sub-subfamily.

The protein resides in the cell membrane. The catalysed reaction is 2 a 1,2-diacyl-sn-glycero-3-phospho-(1'-sn-glycerol) = a cardiolipin + glycerol. Catalyzes the reversible phosphatidyl group transfer from one phosphatidylglycerol molecule to another to form cardiolipin (CL) (diphosphatidylglycerol) and glycerol. The polypeptide is Cardiolipin synthase A (Wigglesworthia glossinidia brevipalpis).